The following is a 171-amino-acid chain: uncharacterized protein (171 aa).

2 disordered regions span residues methionine 1–serine 50 and arginine 71–lysine 91.

This is an uncharacterized protein from Caenorhabditis elegans.